The chain runs to 916 residues: Bifunctional aspartokinase/homoserine dehydrogenase 2, chloroplastic (916 aa).

The N-terminal 87 residues, 1–87, are a transit peptide targeting the chloroplast; it reads MATLKPSFTV…VDQVQIPKGE (87 aa). An aspartokinase region spans residues 88 to 336; sequence MWSVHKFGGT…VNEAVILQTL (249 aa). The interface stretch occupies residues 337–562; it reads SYQEAWEMSY…LSRTTLAMGI (226 aa). 2 consecutive ACT domains span residues 412 to 487 and 493 to 570; these read VEGT…VIPN and AVGQ…LIGA. The homoserine dehydrogenase stretch occupies residues 563 to 916; the sequence is VGPGLIGATL…RLASYLGAPS (354 aa). Isoleucine 568 contributes to the NAD(+) binding site. 4 residues coordinate NADP(+): isoleucine 568, lysine 600, threonine 649, and lysine 673. Residue isoleucine 568 participates in NADPH binding. Threonine 649 contributes to the NAD(+) binding site. 2 residues coordinate NADPH: threonine 649 and lysine 673. Na(+)-binding residues include glutamate 700, valine 703, alanine 705, and leucine 707. NADP(+) contacts are provided by glycine 758 and glutamate 761. Glutamate 761 and aspartate 772 together coordinate L-homoserine. The active-site Proton donor is lysine 776. Position 893 (glycine 893) interacts with NAD(+). NADP(+) is bound at residue glycine 893. Residue glycine 893 participates in NADPH binding.

In the N-terminal section; belongs to the aspartokinase family. It in the C-terminal section; belongs to the homoserine dehydrogenase family. In terms of assembly, homo- or heterodimer. The cofactor is a metal cation.

The protein localises to the plastid. It localises to the chloroplast. The enzyme catalyses L-homoserine + NADP(+) = L-aspartate 4-semialdehyde + NADPH + H(+). It carries out the reaction L-homoserine + NAD(+) = L-aspartate 4-semialdehyde + NADH + H(+). The catalysed reaction is L-aspartate + ATP = 4-phospho-L-aspartate + ADP. It functions in the pathway amino-acid biosynthesis; L-lysine biosynthesis via DAP pathway; (S)-tetrahydrodipicolinate from L-aspartate: step 1/4. The protein operates within amino-acid biosynthesis; L-methionine biosynthesis via de novo pathway; L-homoserine from L-aspartate: step 1/3. It participates in amino-acid biosynthesis; L-methionine biosynthesis via de novo pathway; L-homoserine from L-aspartate: step 3/3. Its pathway is amino-acid biosynthesis; L-threonine biosynthesis; L-threonine from L-aspartate: step 1/5. It functions in the pathway amino-acid biosynthesis; L-threonine biosynthesis; L-threonine from L-aspartate: step 3/5. Its activity is regulated as follows. Threonine interaction with Gln-443 leads to inhibition of aspartate kinase activity and facilitates the binding of a second threonine on Gln-524, leading to a partial inhibition of homoserine dehydrogenase activity (25% of activity remaining at saturation with threonine). Homoserine dehydrogenase activity is also partially inhibited by cysteine (15% of activity remaining at saturation with cysteine). No synergy between threonine and cysteine for the inhibition. 13-fold activation of aspartate kinase activity by cysteine, isoleucine, valine, serine and alanine at 2.5 mM and 4-fold activation by leucine at 2.5 mM, but no activation of homoserine dehydrogenase activity. In terms of biological role, bifunctional aspartate kinase and homoserine dehydrogenase that catalyzes the first and the third steps toward the synthesis of lysine, methionine and threonine from aspartate. The chain is Bifunctional aspartokinase/homoserine dehydrogenase 2, chloroplastic (AKHSDH2) from Arabidopsis thaliana (Mouse-ear cress).